We begin with the raw amino-acid sequence, 277 residues long: Ribosomal RNA small subunit methyltransferase A (277 aa).

Residues histidine 15, leucine 17, glycine 42, glutamate 64, aspartate 89, and asparagine 109 each coordinate S-adenosyl-L-methionine.

Belongs to the class I-like SAM-binding methyltransferase superfamily. rRNA adenine N(6)-methyltransferase family. RsmA subfamily.

The protein resides in the cytoplasm. The catalysed reaction is adenosine(1518)/adenosine(1519) in 16S rRNA + 4 S-adenosyl-L-methionine = N(6)-dimethyladenosine(1518)/N(6)-dimethyladenosine(1519) in 16S rRNA + 4 S-adenosyl-L-homocysteine + 4 H(+). Specifically dimethylates two adjacent adenosines (A1518 and A1519) in the loop of a conserved hairpin near the 3'-end of 16S rRNA in the 30S particle. May play a critical role in biogenesis of 30S subunits. This Synechococcus sp. (strain CC9311) protein is Ribosomal RNA small subunit methyltransferase A.